A 492-amino-acid polypeptide reads, in one-letter code: MNCSLRCRFFLILVMAGFSFFVALFGMRLMHKMAEFAYFEREHVVALSKVYYELHKKEINISFIVGQVQRARRQTTAVNSLWKGDKALLRLLGKGLILELSEASEIKLGLLERYASSIYKDGLNPGHIEEMKRLVSWPYTNSNRFGIEIADISKRVKAYVYFLVVSINCLFFVVIFLLMKKTRSSIDEIVHVMNDMSRGDLTYRTIPSNDEVGKMQSSIIAMGAGVSALIESIKHIQGDLFNSAGEALNISQSTSNDICDQAGKIDEFVSALSQISFAITETSNAANKSSALSSEGRQLAVHGQKAIETAVSSINALSQRVNDSHVAIKCIEADIAKIGKIIEIIDQITDQTNLLALNAAIEAAHAGEAGKGFAVVADEVRSLAQRTNNSTYEIQAMIASLNKGIFFALGVMGDCVVESKNSVNAASEASRSIEKIVDSVSQVMLQIAQVATASEEQSAVVKDMLDNANIIREIAAGVELGSRRISEVNTHR.

2 consecutive transmembrane segments (helical) span residues 9–29 (FFLI…GMRL) and 159–179 (YVYF…FLLM). Residues 180–231 (KKTRSSIDEIVHVMNDMSRGDLTYRTIPSNDEVGKMQSSIIAMGAGVSALIE) enclose the HAMP domain. The region spanning 236-472 (IQGDLFNSAG…DMLDNANIIR (237 aa)) is the Methyl-accepting transducer domain.

The protein belongs to the methyl-accepting chemotaxis (MCP) protein family.

Its subcellular location is the membrane. It functions in the pathway hydrocarbon metabolism; alkane degradation. Chemotactic-signal transducers respond to changes in the concentration of attractants and repellents in the environment, transduce a signal from the outside to the inside of the cell, and facilitate sensory adaptation through the variation of the level of methylation. The protein is Putative methyl-accepting chemotaxis AlkN (alkN) of Ectopseudomonas oleovorans (Pseudomonas oleovorans).